We begin with the raw amino-acid sequence, 131 residues long: MSMSDPIADMLTRIRNAQLVKKKEVNVPSSNLKFAIAGVMQQEGYIESFSVNGVVASKILKIKLKYYDNKPVIEKLKRISKPSLRVYVSNSKIPSVMNGLGIVIVSTPKGVMTGQVALDQNVGGEVLCSIY.

The protein belongs to the universal ribosomal protein uS8 family. As to quaternary structure, part of the 30S ribosomal subunit. Contacts proteins S5 and S12.

In terms of biological role, one of the primary rRNA binding proteins, it binds directly to 16S rRNA central domain where it helps coordinate assembly of the platform of the 30S subunit. The chain is Small ribosomal subunit protein uS8 from Vesicomyosocius okutanii subsp. Calyptogena okutanii (strain HA).